We begin with the raw amino-acid sequence, 285 residues long: Urease accessory protein UreD (285 aa).

It belongs to the UreD family. UreD, UreF and UreG form a complex that acts as a GTP-hydrolysis-dependent molecular chaperone, activating the urease apoprotein by helping to assemble the nickel containing metallocenter of UreC. The UreE protein probably delivers the nickel.

It localises to the cytoplasm. In terms of biological role, required for maturation of urease via the functional incorporation of the urease nickel metallocenter. The protein is Urease accessory protein UreD of Cytophaga hutchinsonii (strain ATCC 33406 / DSM 1761 / CIP 103989 / NBRC 15051 / NCIMB 9469 / D465).